The sequence spans 206 residues: Small ribosomal subunit protein uS4A (206 aa).

The 67-residue stretch at 98-164 folds into the S4 RNA-binding domain; it reads LRLDNVAYKL…EKFKTFAENP (67 aa).

This sequence belongs to the universal ribosomal protein uS4 family. In terms of assembly, part of the 30S ribosomal subunit. Contacts protein S5. The interaction surface between S4 and S5 is involved in control of translational fidelity.

One of the primary rRNA binding proteins, it binds directly to 16S rRNA where it nucleates assembly of the body of the 30S subunit. Functionally, with S5 and S12 plays an important role in translational accuracy. The chain is Small ribosomal subunit protein uS4A (rspD1) from Clostridium acetobutylicum (strain ATCC 824 / DSM 792 / JCM 1419 / IAM 19013 / LMG 5710 / NBRC 13948 / NRRL B-527 / VKM B-1787 / 2291 / W).